Consider the following 347-residue polypeptide: Involucrin (347 aa).

Disordered regions lie at residues 1 to 43 (MSQQ…LPAP) and 56 to 347 (PLED…RRSL). Positions 27 to 36 (ADTQQEQVKQ) are enriched in polar residues. 2 stretches are compositionally biased toward low complexity: residues 70–114 (VPEQ…QQES) and 138–161 (DQQQQQESQVQELHVGHHQQQQES). Composition is skewed to basic and acidic residues over residues 164-173 (QELHVDHHQQ) and 212-221 (QELHVDHHQQ). Composition is skewed to low complexity over residues 222–241 (QQESQVQELHVDHQQQQQES) and 265–285 (DQQQQELQVQEVQQQQQQQQE). Basic and acidic residues predominate over residues 287–341 (QEDHQKAEHLEQEEAQREQQLKGQLEQEKKGVYQHLDQELTKRDEHLEKKGEHCW).

The protein belongs to the involucrin family. In terms of assembly, directly or indirectly cross-linked to cornifelin (CNFN). In terms of processing, substrate of transglutaminase. Specific glutamines or lysines are cross-linked to keratins, desmoplakin and to inter involucrin molecules. Keratinocytes of epidermis and other stratified squamous epithelia.

It is found in the cytoplasm. In terms of biological role, part of the insoluble cornified cell envelope (CE) of stratified squamous epithelia. This chain is Involucrin (IVL), found in Sus scrofa (Pig).